Consider the following 157-residue polypeptide: Phosphopantetheine adenylyltransferase (157 aa).

Substrate is bound at residue serine 9. Residues serine 9 to phenylalanine 10 and histidine 17 contribute to the ATP site. The substrate site is built by lysine 41, leucine 73, and lysine 87. Residues glycine 88–arginine 90, glutamate 98, and tyrosine 123–serine 129 contribute to the ATP site.

It belongs to the bacterial CoaD family. In terms of assembly, homohexamer. The cofactor is Mg(2+).

The protein resides in the cytoplasm. The catalysed reaction is (R)-4'-phosphopantetheine + ATP + H(+) = 3'-dephospho-CoA + diphosphate. The protein operates within cofactor biosynthesis; coenzyme A biosynthesis; CoA from (R)-pantothenate: step 4/5. Functionally, reversibly transfers an adenylyl group from ATP to 4'-phosphopantetheine, yielding dephospho-CoA (dPCoA) and pyrophosphate. The sequence is that of Phosphopantetheine adenylyltransferase from Alkaliphilus oremlandii (strain OhILAs) (Clostridium oremlandii (strain OhILAs)).